Reading from the N-terminus, the 806-residue chain is N-terminal kinase-like protein (806 aa).

The Protein kinase domain occupies 14–314 (FELSPEPPEG…PEDFCRHKVL (301 aa)). HEAT repeat units follow at residues 350–388 (IIPVVVKMFSSTDRAMRIRLLQQMEQFIQYLDEPTVNTQ), 389–427 (IFPHVTHGFLDTNPAIREQTVKSMLLLAPKLNEANLNVE), and 507–545 (ILPVLCGLTVDPEKSVRDQAFKTIRSFLSKLESVSEDPT). 2 disordered regions span residues 586–642 (RAHP…TADR) and 663–806 (DDWS…RKLD). A compositionally biased stretch (pro residues) spans 601-611 (RPVPEGNPAPA). At S752 the chain carries Phosphoserine. The span at 752–762 (SWGEDNWEGLE) shows a compositional bias: acidic residues. Residues 755–795 (EDNWEGLEAESRQVKAELARKKREERRREMEAKRAEKKTTK) adopt a coiled-coil conformation. Composition is skewed to basic and acidic residues over residues 763–773 (AESRQVKAELA) and 780–793 (RRREMEAKRAEKKT). The tract at residues 791–806 (KKTTKGPMKLGARKLD) is interaction with COPB1.

Belongs to the protein kinase superfamily. As to quaternary structure, homooligomer. Interacts with GORAB. Interacts with COPA, COPB1 and COPB2. Interacts with AP2B1. As to expression, expressed in diaphragm, quadriceps, thymus, liver, lung, spleen, kidney, heart and brain. Prominently expressed in neurons, and enriched at central nervous system synapses and neuromuscular junctions.

It is found in the cytoplasm. The protein localises to the cytoskeleton. Its subcellular location is the microtubule organizing center. It localises to the centrosome. The protein resides in the endoplasmic reticulum-Golgi intermediate compartment. It is found in the golgi apparatus. The protein localises to the cis-Golgi network. Functionally, regulates COPI-mediated retrograde protein traffic at the interface between the Golgi apparatus and the endoplasmic reticulum. Involved in the maintenance of the Golgi apparatus morphology. The protein is N-terminal kinase-like protein (Scyl1) of Mus musculus (Mouse).